The following is a 607-amino-acid chain: Chaperone protein DnaK (607 aa).

Thr-174 is modified (phosphothreonine; by autocatalysis). A compositionally biased stretch (polar residues) spans 577-594 (QSAGSTAGNPGQGQSTEN). The segment at 577–607 (QSAGSTAGNPGQGQSTENPGGKTIDGDYKVN) is disordered.

Belongs to the heat shock protein 70 family.

In terms of biological role, acts as a chaperone. The polypeptide is Chaperone protein DnaK (Dictyoglomus turgidum (strain DSM 6724 / Z-1310)).